The primary structure comprises 681 residues: DNA-directed RNA polymerase subunit beta' (681 aa).

4 residues coordinate Zn(2+): C69, C71, C87, and C90. The Mg(2+) site is built by D490, D492, and D494.

Belongs to the RNA polymerase beta' chain family. RpoC1 subfamily. In terms of assembly, in plastids the minimal PEP RNA polymerase catalytic core is composed of four subunits: alpha, beta, beta', and beta''. When a (nuclear-encoded) sigma factor is associated with the core the holoenzyme is formed, which can initiate transcription. It depends on Mg(2+) as a cofactor. The cofactor is Zn(2+).

It localises to the plastid. Its subcellular location is the chloroplast. It carries out the reaction RNA(n) + a ribonucleoside 5'-triphosphate = RNA(n+1) + diphosphate. In terms of biological role, DNA-dependent RNA polymerase catalyzes the transcription of DNA into RNA using the four ribonucleoside triphosphates as substrates. This is DNA-directed RNA polymerase subunit beta' from Liriodendron tulipifera (Tuliptree).